The chain runs to 465 residues: ATP synthase subunit beta (465 aa).

An ATP-binding site is contributed by 149-156 (GGAGVGKT).

It belongs to the ATPase alpha/beta chains family. In terms of assembly, F-type ATPases have 2 components, CF(1) - the catalytic core - and CF(0) - the membrane proton channel. CF(1) has five subunits: alpha(3), beta(3), gamma(1), delta(1), epsilon(1). CF(0) has three main subunits: a(1), b(2) and c(9-12). The alpha and beta chains form an alternating ring which encloses part of the gamma chain. CF(1) is attached to CF(0) by a central stalk formed by the gamma and epsilon chains, while a peripheral stalk is formed by the delta and b chains.

It is found in the cell inner membrane. It carries out the reaction ATP + H2O + 4 H(+)(in) = ADP + phosphate + 5 H(+)(out). In terms of biological role, produces ATP from ADP in the presence of a proton gradient across the membrane. The catalytic sites are hosted primarily by the beta subunits. In Dictyoglomus thermophilum (strain ATCC 35947 / DSM 3960 / H-6-12), this protein is ATP synthase subunit beta.